We begin with the raw amino-acid sequence, 397 residues long: Argininosuccinate synthase (397 aa).

ATP is bound at residue 8 to 16; that stretch reads AYSGGLDTS. 2 residues coordinate L-citrulline: Y86 and S91. G116 is an ATP binding site. Residues T118, N122, and D123 each contribute to the L-aspartate site. N122 is a binding site for L-citrulline. L-citrulline-binding residues include R126, S175, S184, E260, and Y272.

This sequence belongs to the argininosuccinate synthase family. Type 1 subfamily. Homotetramer.

Its subcellular location is the cytoplasm. It carries out the reaction L-citrulline + L-aspartate + ATP = 2-(N(omega)-L-arginino)succinate + AMP + diphosphate + H(+). It participates in amino-acid biosynthesis; L-arginine biosynthesis; L-arginine from L-ornithine and carbamoyl phosphate: step 2/3. The chain is Argininosuccinate synthase from Clostridium botulinum (strain Okra / Type B1).